Reading from the N-terminus, the 930-residue chain is Alanine--tRNA ligase (930 aa).

Histidine 595, histidine 599, cysteine 700, and histidine 704 together coordinate Zn(2+).

This sequence belongs to the class-II aminoacyl-tRNA synthetase family. Requires Zn(2+) as cofactor.

Its subcellular location is the cytoplasm. The catalysed reaction is tRNA(Ala) + L-alanine + ATP = L-alanyl-tRNA(Ala) + AMP + diphosphate. In terms of biological role, catalyzes the attachment of alanine to tRNA(Ala) in a two-step reaction: alanine is first activated by ATP to form Ala-AMP and then transferred to the acceptor end of tRNA(Ala). Also edits incorrectly charged Ser-tRNA(Ala) and Gly-tRNA(Ala) via its editing domain. The polypeptide is Alanine--tRNA ligase (Malacoplasma penetrans (strain HF-2) (Mycoplasma penetrans)).